We begin with the raw amino-acid sequence, 361 residues long: Chorismate synthase (361 aa).

Positions 48 and 54 each coordinate NADP(+). FMN-binding positions include 125 to 127 (RSS), 238 to 239 (NA), glycine 278, 293 to 297 (KPTSS), and arginine 319.

Belongs to the chorismate synthase family. Homotetramer. FMNH2 is required as a cofactor.

The enzyme catalyses 5-O-(1-carboxyvinyl)-3-phosphoshikimate = chorismate + phosphate. Its pathway is metabolic intermediate biosynthesis; chorismate biosynthesis; chorismate from D-erythrose 4-phosphate and phosphoenolpyruvate: step 7/7. Functionally, catalyzes the anti-1,4-elimination of the C-3 phosphate and the C-6 proR hydrogen from 5-enolpyruvylshikimate-3-phosphate (EPSP) to yield chorismate, which is the branch point compound that serves as the starting substrate for the three terminal pathways of aromatic amino acid biosynthesis. This reaction introduces a second double bond into the aromatic ring system. This chain is Chorismate synthase, found in Escherichia coli O1:K1 / APEC.